A 600-amino-acid polypeptide reads, in one-letter code: UvrABC system protein C (600 aa).

A GIY-YIG domain is found at 15 to 92 (DKPGCYLMKD…IKKYQPYYNV (78 aa)). The 36-residue stretch at 197–232 (AQVKQDLTEKMTQASMDLEFERAAEIRDQLKYIEQT) folds into the UVR domain.

This sequence belongs to the UvrC family. As to quaternary structure, interacts with UvrB in an incision complex.

Its subcellular location is the cytoplasm. The UvrABC repair system catalyzes the recognition and processing of DNA lesions. UvrC both incises the 5' and 3' sides of the lesion. The N-terminal half is responsible for the 3' incision and the C-terminal half is responsible for the 5' incision. This is UvrABC system protein C from Lactobacillus johnsonii (strain CNCM I-12250 / La1 / NCC 533).